We begin with the raw amino-acid sequence, 391 residues long: Transcription factor TCP3 (391 aa).

The tract at residues 1–34 is disordered; it reads MAPDNDHFLDSPSPPLLEMRHHQSATENGGGCGE. The TCP domain occupies 49–107; that stretch reads RKDRHSKVCTAKGPRDRRVRLSAPTAIQFYDVQDRLGFDRPSKAVDWLITKAKSAIDDL. 3 disordered regions span residues 122–168, 317–345, and 363–391; these read HAAA…PASM, HHHH…PGIH, and FRIP…DSRH. Positions 381–391 are enriched in polar residues; sequence KPSSASSDSRH.

In terms of assembly, interacts with SPL. Interacts with KIN10; KIN11 and FLZ3. As to expression, expressed in cotyledons, particularly in the vascular region, in leaves, roots, buds, flowers and immature siliques.

The protein resides in the nucleus. Its function is as follows. Plays a pivotal role in the control of morphogenesis of shoot organs by negatively regulating the expression of boundary-specific genes such as CUC genes, probably through the induction of miRNA (e.g. miR164). Participates in ovule development. The chain is Transcription factor TCP3 (TCP3) from Arabidopsis thaliana (Mouse-ear cress).